A 90-amino-acid chain; its full sequence is Small ribosomal subunit protein uS15c (90 aa).

It belongs to the universal ribosomal protein uS15 family. As to quaternary structure, part of the 30S ribosomal subunit.

The protein localises to the plastid. Its subcellular location is the chloroplast. This Citrus sinensis (Sweet orange) protein is Small ribosomal subunit protein uS15c (rps15).